The chain runs to 397 residues: Gamma tubulin complex adapter mto2 (397 aa).

A compositionally biased stretch (basic and acidic residues) spans 1–13 (MSEHNYQSDREVA). Disordered stretches follow at residues 1 to 44 (MSEH…WRAG), 269 to 298 (YTSSVDSSPQRMASDSYGRPSLHLNDPFPS), and 346 to 397 (RSDP…TPSP). 4 stretches are compositionally biased toward polar residues: residues 22–37 (ASANQLSSNSRESTPR), 269–281 (YTSSVDSSPQRMA), 352–369 (RHVSNSTNKSSLHPSPTS), and 382–397 (SPASQSFPSLQDTPSP). A phosphoserine mark is found at Ser-366 and Ser-396.

As to quaternary structure, interacts with mto1; the interaction is direct and required for efficient binding to the gamma-tubulin complex. Interacts with gamma tubulin complex subunits alp4, alp6 and gtb1.

The protein localises to the cytoplasm. It localises to the cytoskeleton. The protein resides in the microtubule organizing center. Its subcellular location is the spindle pole body. Functionally, acts together with mto1 to promote nucleation of at least a subset of cytoplasmic microtubules, by recruiting the gamma-tubulin complex to the interphase microtubule organizing center (iMTOC) and to the equatorial MTOC (eMTOC) during anaphase. Does not appear to be required for cytoplasmic astral microtubule nucleation from the spindle pole body (SPB). Required to establish the eMTOC, and thereby to tether the cytokinetic actin ring. The protein is Gamma tubulin complex adapter mto2 of Schizosaccharomyces pombe (strain 972 / ATCC 24843) (Fission yeast).